The sequence spans 766 residues: Exocyst complex component 6 (766 aa).

Positions 28–90 (NTKQIGDQLE…SLDTSLRQIS (63 aa)) form a coiled coil.

It belongs to the SEC15 family. In terms of assembly, the exocyst complex is composed of Sec3/Exoc1, Sec5/Exoc2, Sec6/Exoc3, Sec8/Exoc4, Sec10/Exoc5, Sec15/Exoc6, Exo70/Exoc7 and Exo84/Exoc8. Interacts with RAB3, RAB8, RAB11 and RAB27. As to expression, detected in developing rhabdomeres in photoreceptor cells.

The protein resides in the cell projection. The protein localises to the rhabdomere. Functionally, component of the exocyst complex involved in the docking of exocytic vesicles with fusion sites on the plasma membrane. This Drosophila melanogaster (Fruit fly) protein is Exocyst complex component 6.